A 282-amino-acid polypeptide reads, in one-letter code: MALKQISSNRCFGGLQKVFEHSSVELKCKMRFAVYLPPQAESGKCPALYWLSGLTCTEQNFISKSGYQQAASEHGLVVIAPDTSPRGCNIKGEDDSWDFGTGAGFYVNATEDPWKANYRMYSYVTEELPQLINANFPVDPQRMSIFGHSMGGHGALICALKNPGKYRSVSAFAPICNPVLCSWGKKAFSGYLGPDESKWKAYDATCLVKAYSGSQIDILIDQGKDDEFLSNGQLLPDNFIAACTEKKIPVVFRLQEGYDHSYYFIATFIADHIRHHAKYLNA.

N-acetylalanine is present on Ala-2. Residue Lys-4 is modified to N6-succinyllysine. Ser-149 (charge relay system) is an active-site residue. Lys-200 carries the post-translational modification N6-acetyllysine. Residues Asp-226 and His-260 each act as charge relay system in the active site.

It belongs to the esterase D family. As to quaternary structure, homodimer.

It is found in the cytoplasm. The protein resides in the cytoplasmic vesicle. The enzyme catalyses S-formylglutathione + H2O = formate + glutathione + H(+). In terms of biological role, serine hydrolase involved in the detoxification of formaldehyde. This Mus musculus (Mouse) protein is S-formylglutathione hydrolase (Esd).